A 443-amino-acid chain; its full sequence is Ribulose bisphosphate carboxylase large chain (443 aa).

Asn-89 and Thr-139 together coordinate substrate. Residue Lys-141 is the Proton acceptor of the active site. Lys-143 contacts substrate. Mg(2+) is bound by residues Lys-167, Asp-169, and Glu-170. Lys-167 is subject to N6-carboxylysine. His-260 functions as the Proton acceptor in the catalytic mechanism. Substrate-binding residues include Arg-261, His-293, and Ser-345.

The protein belongs to the RuBisCO large chain family. Type I subfamily. Heterohexadecamer of 8 large chains and 8 small chains; disulfide-linked. The disulfide link is formed within the large subunit homodimers. The cofactor is Mg(2+). Post-translationally, the disulfide bond which can form in the large chain dimeric partners within the hexadecamer appears to be associated with oxidative stress and protein turnover.

It localises to the plastid. It is found in the chloroplast. The catalysed reaction is 2 (2R)-3-phosphoglycerate + 2 H(+) = D-ribulose 1,5-bisphosphate + CO2 + H2O. It carries out the reaction D-ribulose 1,5-bisphosphate + O2 = 2-phosphoglycolate + (2R)-3-phosphoglycerate + 2 H(+). RuBisCO catalyzes two reactions: the carboxylation of D-ribulose 1,5-bisphosphate, the primary event in carbon dioxide fixation, as well as the oxidative fragmentation of the pentose substrate in the photorespiration process. Both reactions occur simultaneously and in competition at the same active site. The protein is Ribulose bisphosphate carboxylase large chain of Verbena bonariensis (Argentinian vervain).